The chain runs to 1273 residues: Kinesin-like protein KIN-7O (1273 aa).

The 325-residue stretch at 3–327 (RIHVSVRARP…LQFASRALRV (325 aa)) folds into the Kinesin motor domain. 79 to 86 (GQTNSGKT) lines the ATP pocket. The stretch at 333–408 (VNEILTDAAL…QRERVLQEQA (76 aa)) forms a coiled coil. Residues 452-474 (SEDQSNVLSRGSSLESARSERET) are disordered. Residues 453–467 (EDQSNVLSRGSSLES) are compositionally biased toward polar residues. Coiled-coil stretches lie at residues 602 to 674 (EAIL…ESEV) and 751 to 1023 (VQSS…MEEE).

The protein belongs to the TRAFAC class myosin-kinesin ATPase superfamily. Kinesin family. KIN-7 subfamily.

In Arabidopsis thaliana (Mouse-ear cress), this protein is Kinesin-like protein KIN-7O.